A 246-amino-acid chain; its full sequence is Carboxymethylenebutenolidase homolog (246 aa).

Catalysis depends on residues Cys132, Asp179, and His212.

This sequence belongs to the dienelactone hydrolase family.

Its subcellular location is the cytoplasm. The protein localises to the cytosol. In terms of biological role, cysteine hydrolase. The protein is Carboxymethylenebutenolidase homolog (cmbl) of Xenopus tropicalis (Western clawed frog).